Consider the following 268-residue polypeptide: Hydroxyethylthiazole kinase (268 aa).

A substrate-binding site is contributed by Met44. Residues Arg119 and Ser165 each coordinate ATP. Gly192 is a binding site for substrate.

This sequence belongs to the Thz kinase family. The cofactor is Mg(2+).

It catalyses the reaction 5-(2-hydroxyethyl)-4-methylthiazole + ATP = 4-methyl-5-(2-phosphooxyethyl)-thiazole + ADP + H(+). Its pathway is cofactor biosynthesis; thiamine diphosphate biosynthesis; 4-methyl-5-(2-phosphoethyl)-thiazole from 5-(2-hydroxyethyl)-4-methylthiazole: step 1/1. Functionally, catalyzes the phosphorylation of the hydroxyl group of 4-methyl-5-beta-hydroxyethylthiazole (THZ). The protein is Hydroxyethylthiazole kinase of Corynebacterium glutamicum (strain R).